A 410-amino-acid polypeptide reads, in one-letter code: D-3-phosphoglycerate dehydrogenase (410 aa).

Residues 161 to 162, Asp181, 238 to 240, and Asp264 contribute to the NAD(+) site; these read HI and ASR. Arg240 is an active-site residue. Glu269 is an active-site residue. His292 (proton donor) is an active-site residue. NAD(+) is bound at residue 292-295; sequence HIGG. Residues 339-410 form the ACT domain; sequence RLMHIHENRP…PGTIRARLLY (72 aa).

This sequence belongs to the D-isomer specific 2-hydroxyacid dehydrogenase family. Homotetramer.

It catalyses the reaction (2R)-3-phosphoglycerate + NAD(+) = 3-phosphooxypyruvate + NADH + H(+). It carries out the reaction (R)-2-hydroxyglutarate + NAD(+) = 2-oxoglutarate + NADH + H(+). It functions in the pathway amino-acid biosynthesis; L-serine biosynthesis; L-serine from 3-phospho-D-glycerate: step 1/3. With respect to regulation, in bacteria displays feedback inhibition by L-serine. Functionally, catalyzes the reversible oxidation of 3-phospho-D-glycerate to 3-phosphonooxypyruvate, the first step of the phosphorylated L-serine biosynthesis pathway. Also catalyzes the reversible oxidation of 2-hydroxyglutarate to 2-oxoglutarate. This chain is D-3-phosphoglycerate dehydrogenase (serA), found in Escherichia coli O6:H1 (strain CFT073 / ATCC 700928 / UPEC).